We begin with the raw amino-acid sequence, 483 residues long: Glutamyl-tRNA(Gln) amidotransferase subunit A (483 aa).

Active-site charge relay system residues include lysine 77 and serine 152. Serine 176 functions as the Acyl-ester intermediate in the catalytic mechanism.

Belongs to the amidase family. GatA subfamily. In terms of assembly, heterotrimer of A, B and C subunits.

The enzyme catalyses L-glutamyl-tRNA(Gln) + L-glutamine + ATP + H2O = L-glutaminyl-tRNA(Gln) + L-glutamate + ADP + phosphate + H(+). In terms of biological role, allows the formation of correctly charged Gln-tRNA(Gln) through the transamidation of misacylated Glu-tRNA(Gln) in organisms which lack glutaminyl-tRNA synthetase. The reaction takes place in the presence of glutamine and ATP through an activated gamma-phospho-Glu-tRNA(Gln). In Listeria monocytogenes serotype 4b (strain CLIP80459), this protein is Glutamyl-tRNA(Gln) amidotransferase subunit A.